The sequence spans 371 residues: MNNTEFYDRLGVSKDASQDEIKKAYRRMSKKYHPDINKEAGAEEKYKEVQEAYETLSDTQKRAAYDQYGAAGANGGFGGFDGGGFGGFEDIFSSFFGGGGMRNPNAPRQGDDLQYRVNLSFEEAIFGAEKEVSYNRESSCHTCSGSGAKPGTSPVTCQKCHGSGVINVDTQTPLGTMRRQVTCDVCQGSGQEIKEKCPTCHGTGHEKKTHKVSVKIPAGVETGQQIRLTGQGEAGFNGGPYGDLFVIINVLPSQQFERNGSTIYYTLNISFVQAALGDTIDIPTVHGAVEMSIPAGTQTGKTFRLRGKGAPKLRGGGQGDQHVTVNIVTPTKLNDAQKEALHAFAEASGDKMVHPKKKGFFDKVKDALDVD.

The J domain maps to 5 to 69 (EFYDRLGVSK…QKRAAYDQYG (65 aa)). A CR-type zinc finger spans residues 127–209 (GAEKEVSYNR…CHGTGHEKKT (83 aa)). Zn(2+) contacts are provided by Cys-140, Cys-143, Cys-157, Cys-160, Cys-183, Cys-186, Cys-197, and Cys-200. CXXCXGXG motif repeat units follow at residues 140–147 (CHTCSGSG), 157–164 (CQKCHGSG), 183–190 (CDVCQGSG), and 197–204 (CPTCHGTG).

The protein belongs to the DnaJ family. As to quaternary structure, homodimer. Requires Zn(2+) as cofactor.

The protein resides in the cytoplasm. Its function is as follows. Participates actively in the response to hyperosmotic and heat shock by preventing the aggregation of stress-denatured proteins and by disaggregating proteins, also in an autonomous, DnaK-independent fashion. Unfolded proteins bind initially to DnaJ; upon interaction with the DnaJ-bound protein, DnaK hydrolyzes its bound ATP, resulting in the formation of a stable complex. GrpE releases ADP from DnaK; ATP binding to DnaK triggers the release of the substrate protein, thus completing the reaction cycle. Several rounds of ATP-dependent interactions between DnaJ, DnaK and GrpE are required for fully efficient folding. Also involved, together with DnaK and GrpE, in the DNA replication of plasmids through activation of initiation proteins. The chain is Chaperone protein DnaJ from Streptococcus agalactiae serotype Ia (strain ATCC 27591 / A909 / CDC SS700).